A 1295-amino-acid polypeptide reads, in one-letter code: Phosphoribosylformylglycinamidine synthase (1295 aa).

The disordered stretch occupies residues 304 to 326 (WPGAATGSGGEIRDEGATGRGAK). ATP-binding positions include 306 to 317 (GAATGSGGEIRD), 385 to 387 (TGY), and Ala-677. 4 residues coordinate Mg(2+): Asp-678, Glu-717, Asn-721, and Asp-884. Positions 995 to 1012 (LRDNPESADQEHASRQDD) are enriched in basic and acidic residues. A disordered region spans residues 995–1017 (LRDNPESADQEHASRQDDNDPGL). Positions 1042-1295 (VAVLREQGVN…LFRNARKQLG (254 aa)) constitute a Glutamine amidotransferase type-1 domain. Cys-1135 acts as the Nucleophile in catalysis. Active-site residues include His-1260 and Glu-1262.

The protein in the N-terminal section; belongs to the FGAMS family. As to quaternary structure, monomer.

It is found in the cytoplasm. The enzyme catalyses N(2)-formyl-N(1)-(5-phospho-beta-D-ribosyl)glycinamide + L-glutamine + ATP + H2O = 2-formamido-N(1)-(5-O-phospho-beta-D-ribosyl)acetamidine + L-glutamate + ADP + phosphate + H(+). Its pathway is purine metabolism; IMP biosynthesis via de novo pathway; 5-amino-1-(5-phospho-D-ribosyl)imidazole from N(2)-formyl-N(1)-(5-phospho-D-ribosyl)glycinamide: step 1/2. Functionally, phosphoribosylformylglycinamidine synthase involved in the purines biosynthetic pathway. Catalyzes the ATP-dependent conversion of formylglycinamide ribonucleotide (FGAR) and glutamine to yield formylglycinamidine ribonucleotide (FGAM) and glutamate. The polypeptide is Phosphoribosylformylglycinamidine synthase (Sodalis glossinidius (strain morsitans)).